Consider the following 584-residue polypeptide: Ras-specific guanine nucleotide-releasing factor RalGPS1 (584 aa).

Residues 1–13 are compositionally biased toward polar residues; that stretch reads MDLMNGQSSSVNI. Disordered stretches follow at residues 1 to 29, 285 to 338, and 380 to 407; these read MDLM…SLSD, IEPG…IPHG, and HVPS…SELS. Low complexity predominate over residues 14–26; that stretch reads AATASEKSSSSES. Positions 50-288 constitute a Ras-GEF domain; it reads TPEEYAGQIT…YKLSLKIEPG (239 aa). The PXXP signature appears at 326–329; sequence PTPP. Residues 388 to 404 are compositionally biased toward low complexity; that stretch reads ESSTLSSGISIGSSDGS. The region spanning 458–570 is the PH domain; it reads AVTIQGVLRR…WFKHLSAACQ (113 aa).

It is found in the cytoplasm. It localises to the cell membrane. Its function is as follows. Guanine nucleotide exchange factor. May be involved in cytoskeletal organization. This Gallus gallus (Chicken) protein is Ras-specific guanine nucleotide-releasing factor RalGPS1 (RALGPS1).